A 98-amino-acid chain; its full sequence is NADH-ubiquinone oxidoreductase chain 4L (98 aa).

3 consecutive transmembrane segments (helical) span residues 1-21 (MPPI…GMLV), 29-49 (SLLC…TMAL), and 61-81 (IVLL…LVMV).

Belongs to the complex I subunit 4L family. Core subunit of respiratory chain NADH dehydrogenase (Complex I) which is composed of 45 different subunits.

Its subcellular location is the mitochondrion inner membrane. The catalysed reaction is a ubiquinone + NADH + 5 H(+)(in) = a ubiquinol + NAD(+) + 4 H(+)(out). Core subunit of the mitochondrial membrane respiratory chain NADH dehydrogenase (Complex I) which catalyzes electron transfer from NADH through the respiratory chain, using ubiquinone as an electron acceptor. Part of the enzyme membrane arm which is embedded in the lipid bilayer and involved in proton translocation. The protein is NADH-ubiquinone oxidoreductase chain 4L (MT-ND4L) of Orycteropus afer (Aardvark).